Reading from the N-terminus, the 876-residue chain is Extended synaptotagmin-2-B (876 aa).

The segment at 1-21 (MASESGAEKGPPTTPAENGQP) is disordered. Residues 1–35 (MASESGAEKGPPTTPAENGQPGVPIAAAVAADEQG) lie on the Cytoplasmic side of the membrane. A helical membrane pass occupies residues 36–56 (MISVDIAGLFYQFSKTFILIF). The Lumenal segment spans residues 57 to 59 (PVY). A helical membrane pass occupies residues 60–80 (VLGYFGLSFSWLLIALVLLLW). The Cytoplasmic portion of the chain corresponds to 81–876 (WRRNKGNKNS…EDGTRAAASS (796 aa)). An SMP-LTD domain is found at 123-302 (DIERAEWLNK…LPNRITVPLV (180 aa)). 2 consecutive C2 domains span residues 301 to 421 (LVSD…DEWF) and 446 to 592 (NLDQ…HLNN). Ca(2+)-binding residues include Lys-332, Asp-333, Asp-345, Asp-392, Glu-393, Asp-394, Asp-396, Asp-398, and Asp-399. Positions 614–714 (VRSPDEQHTS…KEPTPSIASD (101 aa)) are disordered. Residues 636 to 656 (PPTPQMPAPSPAVAHKPPPTP) show a composition bias toward pro residues. The span at 686 to 698 (SSSSLSGSSFTYS) shows a compositional bias: low complexity. The 123-residue stretch at 741-863 (PLGQIQLTIR…DAAKGWTQWF (123 aa)) folds into the C2 3 domain. The segment at 788–795 (KRRSGRRK) is required for phosphatidylinositol 4,5-bisphosphate-dependent location at the cell membrane.

This sequence belongs to the extended synaptotagmin family. As to quaternary structure, interacts with fgfr1 that has been activated by fgf1 binding. Interacts (via C2 domains) with the AP-2 complex (via an alpha subunit). Identified in a complex with the AP-2 complex and fgfr1.

The protein localises to the cell membrane. It is found in the endoplasmic reticulum membrane. Its function is as follows. Tethers the endoplasmic reticulum to the cell membrane and promotes the formation of appositions between the endoplasmic reticulum and the cell membrane. Binds glycerophospholipids in a barrel-like domain and may play a role in cellular lipid transport. Plays a role in the rapid internalization of fgfr1 that has been activated by fgf1 binding; this occurs most likely via the AP-2 complex. Required for normal fgf signaling and the activation of downstream signaling cascades via its role in the internalization of activated fgfr1. Required for normal embryonic development via its role in fgf signaling and the downstream regulation of t/xBRA expression. This is Extended synaptotagmin-2-B (esyt2-b) from Xenopus laevis (African clawed frog).